Here is a 508-residue protein sequence, read N- to C-terminus: BTB/POZ domain-containing protein At3g03510 (508 aa).

A BTB domain is found at 11 to 77 (QDLDLYVKGV…CYGYKIELSA (67 aa)). Positions 156 to 414 (TRLLQDLITL…MQVLFVSQMQ (259 aa)) constitute an NPH3 domain. The residue at position 355 (Y355) is a Phosphotyrosine.

The protein belongs to the NPH3 family.

It participates in protein modification; protein ubiquitination. In terms of biological role, may act as a substrate-specific adapter of an E3 ubiquitin-protein ligase complex (CUL3-RBX1-BTB) which mediates the ubiquitination and subsequent proteasomal degradation of target proteins. The chain is BTB/POZ domain-containing protein At3g03510 from Arabidopsis thaliana (Mouse-ear cress).